Consider the following 117-residue polypeptide: UPF0145 protein CV_4322 (117 aa).

It belongs to the UPF0145 family.

In Chromobacterium violaceum (strain ATCC 12472 / DSM 30191 / JCM 1249 / CCUG 213 / NBRC 12614 / NCIMB 9131 / NCTC 9757 / MK), this protein is UPF0145 protein CV_4322.